The chain runs to 265 residues: Orphan methyltransferase M.BamHII (265 aa).

This sequence belongs to the N(4)/N(6)-methyltransferase family. N(4) subfamily.

It carries out the reaction a 2'-deoxycytidine in DNA + S-adenosyl-L-methionine = an N(4)-methyl-2'-deoxycytidine in DNA + S-adenosyl-L-homocysteine + H(+). A beta subtype methylase, recognizes the double-stranded sequence 5'-GGATCC-3', methylates C-? on both strands. No endonuclease has been identified for this methylase, although it is speculated it might protect against BamHI. In Bacillus amyloliquefaciens (Bacillus velezensis), this protein is Orphan methyltransferase M.BamHII (bamHIIM).